Here is a 299-residue protein sequence, read N- to C-terminus: Lipoyl synthase (299 aa).

Residues Cys-34, Cys-39, Cys-45, Cys-60, Cys-64, Cys-67, and Ser-273 each contribute to the [4Fe-4S] cluster site. The 217-residue stretch at Trp-46–Leu-262 folds into the Radical SAM core domain.

Belongs to the radical SAM superfamily. Lipoyl synthase family. It depends on [4Fe-4S] cluster as a cofactor.

It localises to the cytoplasm. It catalyses the reaction [[Fe-S] cluster scaffold protein carrying a second [4Fe-4S](2+) cluster] + N(6)-octanoyl-L-lysyl-[protein] + 2 oxidized [2Fe-2S]-[ferredoxin] + 2 S-adenosyl-L-methionine + 4 H(+) = [[Fe-S] cluster scaffold protein] + N(6)-[(R)-dihydrolipoyl]-L-lysyl-[protein] + 4 Fe(3+) + 2 hydrogen sulfide + 2 5'-deoxyadenosine + 2 L-methionine + 2 reduced [2Fe-2S]-[ferredoxin]. Its pathway is protein modification; protein lipoylation via endogenous pathway; protein N(6)-(lipoyl)lysine from octanoyl-[acyl-carrier-protein]: step 2/2. Catalyzes the radical-mediated insertion of two sulfur atoms into the C-6 and C-8 positions of the octanoyl moiety bound to the lipoyl domains of lipoate-dependent enzymes, thereby converting the octanoylated domains into lipoylated derivatives. The chain is Lipoyl synthase from Ehrlichia canis (strain Jake).